The chain runs to 364 residues: MSKPVNLVLLYGGKSGEHEVSLVSAASVLKHLDSEKYHIIPIAMDKSGRFHRHDYNDLLACSDKLPVVTEKSTPLEGLLINGRLAVDAEIVFPVVHGPLYEDGCLQGLLELAGVAYVGCDVLSSAIGMDKDMARRLACINGLKSARYKLLSWHANASERQQFCHEVASEFGWPLFVKPCSLGSSVGIHKANNMDELNAAVADALRYDEEILVEEFIVGREIELAVLENSIPCGKPRVSMVGEIKVNHPDGYYSYTAKYLESSQTDLIIPAQLNNSLEEQLKQAAANIFSYLKCKGMARVDFFVNDKTEEIYFNEINTLPGFTSISMYPKLWQATGIAYPDLLDELINLAMIHHNCRQHLVTNYL.

The ATP-grasp domain maps to 134-347 (RRLACINGLK…YPDLLDELIN (214 aa)). An ATP-binding site is contributed by 167–222 (ASEFGWPLFVKPCSLGSSVGIHKANNMDELNAAVADALRYDEEILVEEFIVGREIE). Mg(2+) contacts are provided by Asp300, Glu314, and Asn316.

Belongs to the D-alanine--D-alanine ligase family. The cofactor is Mg(2+). Mn(2+) serves as cofactor.

The protein resides in the cytoplasm. It catalyses the reaction 2 D-alanine + ATP = D-alanyl-D-alanine + ADP + phosphate + H(+). It functions in the pathway cell wall biogenesis; peptidoglycan biosynthesis. Functionally, cell wall formation. This Legionella pneumophila (strain Lens) protein is D-alanine--D-alanine ligase.